Here is a 635-residue protein sequence, read N- to C-terminus: 4-hydroxy-3-methylbut-2-enyl diphosphate reductase (635 aa).

The tract at residues 1-279 (MSIILAKKSG…KEAIFKMSNK (279 aa)) is 4-hydroxy-3-methylbut-2-enyl diphosphate reductase. A [4Fe-4S] cluster-binding site is contributed by Cys-12. (2E)-4-hydroxy-3-methylbut-2-enyl diphosphate is bound by residues His-42 and His-77. Dimethylallyl diphosphate-binding residues include His-42 and His-77. Residues His-42 and His-77 each coordinate isopentenyl diphosphate. Cys-99 lines the [4Fe-4S] cluster pocket. His-127 contacts (2E)-4-hydroxy-3-methylbut-2-enyl diphosphate. His-127 contributes to the dimethylallyl diphosphate binding site. Residue His-127 participates in isopentenyl diphosphate binding. Glu-129 (proton donor) is an active-site residue. Thr-163 lines the (2E)-4-hydroxy-3-methylbut-2-enyl diphosphate pocket. Position 191 (Cys-191) interacts with [4Fe-4S] cluster. 4 residues coordinate (2E)-4-hydroxy-3-methylbut-2-enyl diphosphate: Ser-219, Ser-220, Asn-221, and Ser-263. Dimethylallyl diphosphate-binding residues include Ser-219, Ser-220, Asn-221, and Ser-263. 4 residues coordinate isopentenyl diphosphate: Ser-219, Ser-220, Asn-221, and Ser-263. S1 motif domains follow at residues 298-373 (GQEV…LNRE), 380-455 (KEAF…ASRR), 476-544 (DTIK…LSIK), and 561-630 (GNIV…LSIK).

The protein in the N-terminal section; belongs to the IspH family. The cofactor is [4Fe-4S] cluster.

The enzyme catalyses isopentenyl diphosphate + 2 oxidized [2Fe-2S]-[ferredoxin] + H2O = (2E)-4-hydroxy-3-methylbut-2-enyl diphosphate + 2 reduced [2Fe-2S]-[ferredoxin] + 2 H(+). It catalyses the reaction dimethylallyl diphosphate + 2 oxidized [2Fe-2S]-[ferredoxin] + H2O = (2E)-4-hydroxy-3-methylbut-2-enyl diphosphate + 2 reduced [2Fe-2S]-[ferredoxin] + 2 H(+). It functions in the pathway isoprenoid biosynthesis; dimethylallyl diphosphate biosynthesis; dimethylallyl diphosphate from (2E)-4-hydroxy-3-methylbutenyl diphosphate: step 1/1. Its pathway is isoprenoid biosynthesis; isopentenyl diphosphate biosynthesis via DXP pathway; isopentenyl diphosphate from 1-deoxy-D-xylulose 5-phosphate: step 6/6. Its function is as follows. Catalyzes the conversion of 1-hydroxy-2-methyl-2-(E)-butenyl 4-diphosphate (HMBPP) into a mixture of isopentenyl diphosphate (IPP) and dimethylallyl diphosphate (DMAPP). Acts in the terminal step of the DOXP/MEP pathway for isoprenoid precursor biosynthesis. The sequence is that of 4-hydroxy-3-methylbut-2-enyl diphosphate reductase from Clostridium tetani (strain Massachusetts / E88).